The sequence spans 185 residues: Elongation factor P (185 aa).

The protein belongs to the elongation factor P family.

It is found in the cytoplasm. It participates in protein biosynthesis; polypeptide chain elongation. Functionally, involved in peptide bond synthesis. Stimulates efficient translation and peptide-bond synthesis on native or reconstituted 70S ribosomes in vitro. Probably functions indirectly by altering the affinity of the ribosome for aminoacyl-tRNA, thus increasing their reactivity as acceptors for peptidyl transferase. The chain is Elongation factor P from Clostridium perfringens (strain ATCC 13124 / DSM 756 / JCM 1290 / NCIMB 6125 / NCTC 8237 / Type A).